The sequence spans 409 residues: Elongation factor Tu (409 aa).

The tr-type G domain occupies 10 to 214 (KPHANIGTIG…EVDAYIPTPE (205 aa)). The segment at 19–26 (GHVDHGKT) is G1. 19-26 (GHVDHGKT) is a GTP binding site. Residue Thr-26 coordinates Mg(2+). Residues 60 to 64 (GITIN) form a G2 region. A G3 region spans residues 81 to 84 (DCPG). GTP contacts are provided by residues 81 to 85 (DCPGH) and 136 to 139 (NKED). Residues 136–139 (NKED) form a G4 region. The tract at residues 174 to 176 (SAL) is G5.

The protein belongs to the TRAFAC class translation factor GTPase superfamily. Classic translation factor GTPase family. EF-Tu/EF-1A subfamily. As to quaternary structure, monomer.

The protein localises to the cytoplasm. The enzyme catalyses GTP + H2O = GDP + phosphate + H(+). Functionally, GTP hydrolase that promotes the GTP-dependent binding of aminoacyl-tRNA to the A-site of ribosomes during protein biosynthesis. The protein is Elongation factor Tu of Synechococcus elongatus (strain ATCC 33912 / PCC 7942 / FACHB-805) (Anacystis nidulans R2).